Reading from the N-terminus, the 120-residue chain is Small ribosomal subunit protein eS24 (120 aa).

The segment at 101 to 120 is disordered; it reads RDAGTKQKKGGSKGGQGAKG.

This sequence belongs to the eukaryotic ribosomal protein eS24 family.

This Saccharolobus islandicus (strain Y.N.15.51 / Yellowstone #2) (Sulfolobus islandicus) protein is Small ribosomal subunit protein eS24.